Reading from the N-terminus, the 232-residue chain is EEF1A lysine methyltransferase 3 (232 aa).

S-adenosyl-L-methionine contacts are provided by residues Trp57, 83-85 (GAG), Asp104, Trp133, and Ala150.

It belongs to the methyltransferase superfamily. METTL21 family. Interacts with members of the heat shock protein 70 and 90 families and of the TCP-1 chaperonin family, as well as with HSPD1, STIP1 and tubulin; at least some of these proteins may be methylation substrates.

It is found in the cytoplasm. The protein resides in the cytoskeleton. The protein localises to the microtubule organizing center. Its subcellular location is the centrosome. It carries out the reaction L-lysyl-[protein] + 3 S-adenosyl-L-methionine = N(6),N(6),N(6)-trimethyl-L-lysyl-[protein] + 3 S-adenosyl-L-homocysteine + 3 H(+). It catalyses the reaction L-lysyl-[protein] + S-adenosyl-L-methionine = N(6)-methyl-L-lysyl-[protein] + S-adenosyl-L-homocysteine + H(+). The enzyme catalyses N(6)-methyl-L-lysyl-[protein] + S-adenosyl-L-methionine = N(6),N(6)-dimethyl-L-lysyl-[protein] + S-adenosyl-L-homocysteine + H(+). The catalysed reaction is N(6),N(6)-dimethyl-L-lysyl-[protein] + S-adenosyl-L-methionine = N(6),N(6),N(6)-trimethyl-L-lysyl-[protein] + S-adenosyl-L-homocysteine + H(+). Functionally, protein-lysine methyltransferase that selectively mono-, di- and trimethylates 'Lys-165' of the translation elongation factors EEF1A1 and EEF1A2 in an aminoacyl-tRNA and GTP-dependent manner. EEF1A1 methylation by EEF1AKMT3 is dynamic as well as inducible by stress conditions, such as ER-stress, and plays a regulatory role on mRNA translation. The chain is EEF1A lysine methyltransferase 3 from Mus musculus (Mouse).